Reading from the N-terminus, the 451-residue chain is Porin AaxA (451 aa).

The first 27 residues, 1 to 27 (MASFHSSLLTALCTLCTYGILTMPAYG), serve as a signal peptide directing secretion.

This sequence belongs to the OprB family.

Its subcellular location is the cell outer membrane. Its function is as follows. Facilitates L-arginine uptake, as part of the AaxABC system. The arginine uptake by the bacterium in the macrophage may be a virulence factor against the host innate immune response. The polypeptide is Porin AaxA (aaxA) (Chlamydia caviae (strain ATCC VR-813 / DSM 19441 / 03DC25 / GPIC) (Chlamydophila caviae)).